The sequence spans 295 residues: Light-independent protochlorophyllide reductase iron-sulfur ATP-binding protein (295 aa).

Residues 39 to 44 (GIGKST) and K68 each bind ATP. Residue S43 coordinates Mg(2+). [4Fe-4S] cluster-binding residues include C124 and C158. An ATP-binding site is contributed by 209–210 (NR).

Belongs to the NifH/BchL/ChlL family. In terms of assembly, homodimer. Protochlorophyllide reductase is composed of three subunits; ChlL, ChlN and ChlB. [4Fe-4S] cluster is required as a cofactor.

The catalysed reaction is chlorophyllide a + oxidized 2[4Fe-4S]-[ferredoxin] + 2 ADP + 2 phosphate = protochlorophyllide a + reduced 2[4Fe-4S]-[ferredoxin] + 2 ATP + 2 H2O. Its pathway is porphyrin-containing compound metabolism; chlorophyll biosynthesis (light-independent). Its function is as follows. Component of the dark-operative protochlorophyllide reductase (DPOR) that uses Mg-ATP and reduced ferredoxin to reduce ring D of protochlorophyllide (Pchlide) to form chlorophyllide a (Chlide). This reaction is light-independent. The L component serves as a unique electron donor to the NB-component of the complex, and binds Mg-ATP. The sequence is that of Light-independent protochlorophyllide reductase iron-sulfur ATP-binding protein from Prochlorococcus marinus (strain MIT 9312).